A 281-amino-acid polypeptide reads, in one-letter code: Energy-coupling factor transporter ATP-binding protein EcfA2 (281 aa).

One can recognise an ABC transporter domain in the interval 3–242; the sequence is IKVTGLTYVY…TETLEEIGLA (240 aa). 40–47 is a binding site for ATP; sequence GHTGSGKS.

It belongs to the ABC transporter superfamily. Energy-coupling factor EcfA family. As to quaternary structure, forms a stable energy-coupling factor (ECF) transporter complex composed of 2 membrane-embedded substrate-binding proteins (S component), 2 ATP-binding proteins (A component) and 2 transmembrane proteins (T component).

It localises to the cell membrane. ATP-binding (A) component of a common energy-coupling factor (ECF) ABC-transporter complex. Unlike classic ABC transporters this ECF transporter provides the energy necessary to transport a number of different substrates. The polypeptide is Energy-coupling factor transporter ATP-binding protein EcfA2 (Acetivibrio thermocellus (strain ATCC 27405 / DSM 1237 / JCM 9322 / NBRC 103400 / NCIMB 10682 / NRRL B-4536 / VPI 7372) (Clostridium thermocellum)).